The sequence spans 141 residues: 16 kDa protein (141 aa).

Residues threonine 100–glutamate 119 form a disordered region. Positions lysine 102–lysine 115 are enriched in basic residues.

The protein is 16 kDa protein of Tobacco rattle virus (strain PLB).